The sequence spans 178 residues: Large ribosomal subunit protein bL17 (178 aa).

Low complexity-rich tracts occupy residues 123–139 (KAPA…NTAT) and 151–160 (EDAAAQAPVA). The interval 123-178 (KAPASAADAKAQINTATEAKEAEPEAPAEDAAAQAPVADEQKAAEVDEKAEEKPEA) is disordered. Residues 161 to 178 (DEQKAAEVDEKAEEKPEA) show a composition bias toward basic and acidic residues.

This sequence belongs to the bacterial ribosomal protein bL17 family. Part of the 50S ribosomal subunit. Contacts protein L32.

The chain is Large ribosomal subunit protein bL17 from Cutibacterium acnes (strain DSM 16379 / KPA171202) (Propionibacterium acnes).